A 289-amino-acid polypeptide reads, in one-letter code: 4-diphosphocytidyl-2-C-methyl-D-erythritol kinase (289 aa).

Lys-11 is a catalytic residue. ATP is bound at residue 93-103; it reads PLAAGLAGGSA. Asp-135 is an active-site residue.

Belongs to the GHMP kinase family. IspE subfamily.

It carries out the reaction 4-CDP-2-C-methyl-D-erythritol + ATP = 4-CDP-2-C-methyl-D-erythritol 2-phosphate + ADP + H(+). It participates in isoprenoid biosynthesis; isopentenyl diphosphate biosynthesis via DXP pathway; isopentenyl diphosphate from 1-deoxy-D-xylulose 5-phosphate: step 3/6. Its function is as follows. Catalyzes the phosphorylation of the position 2 hydroxy group of 4-diphosphocytidyl-2C-methyl-D-erythritol. This chain is 4-diphosphocytidyl-2-C-methyl-D-erythritol kinase, found in Thermoanaerobacter sp. (strain X514).